Reading from the N-terminus, the 209-residue chain is Octanoyltransferase (209 aa).

The BPL/LPL catalytic domain maps to 30–209 (DHEPEIIYLV…IQTEFNKIFK (180 aa)). Substrate-binding positions include 69 to 76 (RGGKFTFH), 143 to 145 (AIG), and 156 to 158 (GVA). Cys-174 functions as the Acyl-thioester intermediate in the catalytic mechanism.

This sequence belongs to the LipB family.

It is found in the cytoplasm. It carries out the reaction octanoyl-[ACP] + L-lysyl-[protein] = N(6)-octanoyl-L-lysyl-[protein] + holo-[ACP] + H(+). It functions in the pathway protein modification; protein lipoylation via endogenous pathway; protein N(6)-(lipoyl)lysine from octanoyl-[acyl-carrier-protein]: step 1/2. Functionally, catalyzes the transfer of endogenously produced octanoic acid from octanoyl-acyl-carrier-protein onto the lipoyl domains of lipoate-dependent enzymes. Lipoyl-ACP can also act as a substrate although octanoyl-ACP is likely to be the physiological substrate. The sequence is that of Octanoyltransferase from Rickettsia africae (strain ESF-5).